The sequence spans 163 residues: SsrA-binding protein (163 aa).

The protein belongs to the SmpB family.

It localises to the cytoplasm. Functionally, required for rescue of stalled ribosomes mediated by trans-translation. Binds to transfer-messenger RNA (tmRNA), required for stable association of tmRNA with ribosomes. tmRNA and SmpB together mimic tRNA shape, replacing the anticodon stem-loop with SmpB. tmRNA is encoded by the ssrA gene; the 2 termini fold to resemble tRNA(Ala) and it encodes a 'tag peptide', a short internal open reading frame. During trans-translation Ala-aminoacylated tmRNA acts like a tRNA, entering the A-site of stalled ribosomes, displacing the stalled mRNA. The ribosome then switches to translate the ORF on the tmRNA; the nascent peptide is terminated with the 'tag peptide' encoded by the tmRNA and targeted for degradation. The ribosome is freed to recommence translation, which seems to be the essential function of trans-translation. This is SsrA-binding protein from Shewanella sp. (strain ANA-3).